A 310-amino-acid chain; its full sequence is Carbamate kinase 1 (310 aa).

This sequence belongs to the carbamate kinase family.

It localises to the cytoplasm. It catalyses the reaction hydrogencarbonate + NH4(+) + ATP = carbamoyl phosphate + ADP + H2O + H(+). The protein operates within metabolic intermediate metabolism; carbamoyl phosphate degradation; CO(2) and NH(3) from carbamoyl phosphate: step 1/1. In Staphylococcus aureus (strain MRSA252), this protein is Carbamate kinase 1 (arcC1).